A 202-amino-acid polypeptide reads, in one-letter code: Small ribosomal subunit protein uS5 (202 aa).

Positions 50–113 (LKQELLNVNI…REAKLNLIPV (64 aa)) constitute an S5 DRBM domain.

It belongs to the universal ribosomal protein uS5 family. Part of the 30S ribosomal subunit. Contacts protein S4.

Its function is as follows. With S4 and S12 plays an important role in translational accuracy. The sequence is that of Small ribosomal subunit protein uS5 from Pyrobaculum arsenaticum (strain DSM 13514 / JCM 11321 / PZ6).